The chain runs to 365 residues: Coxsackievirus and adenovirus receptor (365 aa).

A signal peptide spans 1 to 19 (MALLLCFVLLCGVVDFARS). Ig-like C2-type domains follow at residues 20–134 (LSIT…KKIH) and 141–228 (PSGA…LRLN). Topologically, residues 20 to 237 (LSITTPEEMI…NVVPPSNKAG (218 aa)) are extracellular. 2 disulfides stabilise this stretch: Cys-41–Cys-120 and Cys-162–Cys-212. 2 N-linked (GlcNAc...) asparagine glycosylation sites follow: Asn-106 and Asn-201. Residues 238–258 (LIAGAIIGTLLALALIGLIIF) form a helical membrane-spanning segment. S-palmitoyl cysteine attachment occurs at residues Cys-259 and Cys-260. Topologically, residues 259-365 (CCRKKRREEK…PAQSKDGSIV (107 aa)) are cytoplasmic. Over residues 269–282 (YEKEVHHDIREDVP) the composition is skewed to basic and acidic residues. Residues 269–343 (YEKEVHHDIR…TLPPAKVAAP (75 aa)) form a disordered region. The span at 286–322 (SRTSTARSYIGSNHSSLGSMSPSNMEGYSKTQYNQVP) shows a compositional bias: polar residues. Phosphoserine is present on residues Ser-297, Ser-304, Ser-306, Ser-323, Ser-332, and Ser-363. The PDZ-binding motif lies at 360 to 365 (KDGSIV).

Monomer. May form homodimer. Interacts with LNX, MAGI1, DLG4, PRKCABP, TJP1 and CTNNB1. Interacts with MPDZ; recruits MPDZ to intercellular contact sites. Interacts with JAML (homodimeric form). Secreted isoform 3, isoform 4 and isoform 5 can interact with the extracellular domain of the receptor. As to quaternary structure, (Microbial infection) Interacts with adenovirus subgroups A, C, D, E and F fiber proteins as well as coxsackievirus B1, B2, B3, B4, B5 and B6 capsid proteins. Post-translationally, N-glycosylated. Palmitoylated on Cys-259 and/or Cys-260; required for proper localization to the plasma membrane. Expressed in pancreas, brain, heart, small intestine, testis, prostate and at a lower level in liver and lung. Isoform 5 is ubiquitously expressed. Isoform 3 is expressed in heart, lung and pancreas. In skeletal muscle, isoform 1 is found at the neuromuscular junction and isoform 2 is found in blood vessels. In cardiac muscle, isoform 1 and isoform 2 are found at intercalated disks. In heart expressed in subendothelial layers of the vessel wall but not in the luminal endothelial surface. Expression is elevated in hearts with dilated cardiomyopathy.

The protein localises to the cell membrane. Its subcellular location is the basolateral cell membrane. The protein resides in the cell junction. It localises to the tight junction. It is found in the adherens junction. The protein localises to the secreted. Its function is as follows. Component of the epithelial apical junction complex that may function as a homophilic cell adhesion molecule and is essential for tight junction integrity. Also involved in transepithelial migration of leukocytes through adhesive interactions with JAML a transmembrane protein of the plasma membrane of leukocytes. The interaction between both receptors also mediates the activation of gamma-delta T-cells, a subpopulation of T-cells residing in epithelia and involved in tissue homeostasis and repair. Upon epithelial CXADR-binding, JAML induces downstream cell signaling events in gamma-delta T-cells through PI3-kinase and MAP kinases. It results in proliferation and production of cytokines and growth factors by T-cells that in turn stimulate epithelial tissues repair. Functionally, (Microbial infection) Acts as a receptor for adenovirus type C. In terms of biological role, (Microbial infection) Acts as a receptor for Coxsackievirus B1 to B6. The sequence is that of Coxsackievirus and adenovirus receptor (CXADR) from Homo sapiens (Human).